A 291-amino-acid polypeptide reads, in one-letter code: Ribonuclease Z (291 aa).

Residues His-61, His-63, Asp-65, His-66, His-133, Asp-201, and His-257 each contribute to the Zn(2+) site. Catalysis depends on Asp-65, which acts as the Proton acceptor.

The protein belongs to the RNase Z family. As to quaternary structure, homodimer. It depends on Zn(2+) as a cofactor.

It carries out the reaction Endonucleolytic cleavage of RNA, removing extra 3' nucleotides from tRNA precursor, generating 3' termini of tRNAs. A 3'-hydroxy group is left at the tRNA terminus and a 5'-phosphoryl group is left at the trailer molecule.. Its function is as follows. Zinc phosphodiesterase, which displays some tRNA 3'-processing endonuclease activity. Probably involved in tRNA maturation, by removing a 3'-trailer from precursor tRNA. The protein is Ribonuclease Z of Saccharolobus islandicus (strain L.S.2.15 / Lassen #1) (Sulfolobus islandicus).